The primary structure comprises 300 residues: 4-hydroxy-tetrahydrodipicolinate synthase (300 aa).

A pyruvate-binding site is contributed by threonine 45. Catalysis depends on tyrosine 140, which acts as the Proton donor/acceptor. The active-site Schiff-base intermediate with substrate is lysine 169. Isoleucine 210 contacts pyruvate.

This sequence belongs to the DapA family. In terms of assembly, homotetramer; dimer of dimers.

It localises to the cytoplasm. It catalyses the reaction L-aspartate 4-semialdehyde + pyruvate = (2S,4S)-4-hydroxy-2,3,4,5-tetrahydrodipicolinate + H2O + H(+). Its pathway is amino-acid biosynthesis; L-lysine biosynthesis via DAP pathway; (S)-tetrahydrodipicolinate from L-aspartate: step 3/4. Catalyzes the condensation of (S)-aspartate-beta-semialdehyde [(S)-ASA] and pyruvate to 4-hydroxy-tetrahydrodipicolinate (HTPA). In Helicobacter pylori (strain HPAG1), this protein is 4-hydroxy-tetrahydrodipicolinate synthase.